We begin with the raw amino-acid sequence, 367 residues long: Chorismate synthase (367 aa).

An NADP(+)-binding site is contributed by arginine 48. Residues 125–127 (RSS), 238–239 (NA), glycine 278, 293–297 (KPTSS), and arginine 319 each bind FMN.

It belongs to the chorismate synthase family. As to quaternary structure, homotetramer. The cofactor is FMNH2.

It carries out the reaction 5-O-(1-carboxyvinyl)-3-phosphoshikimate = chorismate + phosphate. Its pathway is metabolic intermediate biosynthesis; chorismate biosynthesis; chorismate from D-erythrose 4-phosphate and phosphoenolpyruvate: step 7/7. Catalyzes the anti-1,4-elimination of the C-3 phosphate and the C-6 proR hydrogen from 5-enolpyruvylshikimate-3-phosphate (EPSP) to yield chorismate, which is the branch point compound that serves as the starting substrate for the three terminal pathways of aromatic amino acid biosynthesis. This reaction introduces a second double bond into the aromatic ring system. The protein is Chorismate synthase of Halorhodospira halophila (strain DSM 244 / SL1) (Ectothiorhodospira halophila (strain DSM 244 / SL1)).